Consider the following 324-residue polypeptide: uncharacterized protein (324 aa).

It to the C-terminal of para-aminobenzoate synthase component I.

This is an uncharacterized protein from Pasteurella multocida (strain Pm70).